A 592-amino-acid polypeptide reads, in one-letter code: Aspartate--tRNA(Asp/Asn) ligase (592 aa).

Glu172 is an L-aspartate binding site. The aspartate stretch occupies residues 196-199 (QLFK). Residue Arg218 coordinates L-aspartate. Residues 218–220 (RDE) and Gln227 contribute to the ATP site. An L-aspartate-binding site is contributed by His442. Glu476 is an ATP binding site. Position 483 (Arg483) interacts with L-aspartate. Residue 528–531 (GWDR) participates in ATP binding. Residues 553–592 (SGTDPLTGAPTPITPEQRKEAGIDADPYAAAGRPPGRQSA) form a disordered region.

This sequence belongs to the class-II aminoacyl-tRNA synthetase family. Type 1 subfamily. As to quaternary structure, homodimer.

It is found in the cytoplasm. It carries out the reaction tRNA(Asx) + L-aspartate + ATP = L-aspartyl-tRNA(Asx) + AMP + diphosphate. Aspartyl-tRNA synthetase with relaxed tRNA specificity since it is able to aspartylate not only its cognate tRNA(Asp) but also tRNA(Asn). Reaction proceeds in two steps: L-aspartate is first activated by ATP to form Asp-AMP and then transferred to the acceptor end of tRNA(Asp/Asn). The polypeptide is Aspartate--tRNA(Asp/Asn) ligase (Acidothermus cellulolyticus (strain ATCC 43068 / DSM 8971 / 11B)).